Reading from the N-terminus, the 298-residue chain is 1D-myo-inositol 2-acetamido-2-deoxy-alpha-D-glucopyranoside deacetylase (298 aa).

Positions 14, 17, and 148 each coordinate Zn(2+). Residues 277-298 (RGPAGPDGREHDLFAGLDGPAT) form a disordered region.

The protein belongs to the MshB deacetylase family. Zn(2+) is required as a cofactor.

It catalyses the reaction 1D-myo-inositol 2-acetamido-2-deoxy-alpha-D-glucopyranoside + H2O = 1D-myo-inositol 2-amino-2-deoxy-alpha-D-glucopyranoside + acetate. Functionally, catalyzes the deacetylation of 1D-myo-inositol 2-acetamido-2-deoxy-alpha-D-glucopyranoside (GlcNAc-Ins) in the mycothiol biosynthesis pathway. The polypeptide is 1D-myo-inositol 2-acetamido-2-deoxy-alpha-D-glucopyranoside deacetylase (Nocardia farcinica (strain IFM 10152)).